A 513-amino-acid polypeptide reads, in one-letter code: MQLNSTEISELIKKRIAQFDVVSEARNTGTIVSVSDGIIRIHGLSEVMQGEMIALPTGRFAMALNLERDSVGAVVMGPYTDLAEGMEVQCTGRILEVPVGRGLLGRVVNTLGQPIDGKGEIKNDGFSPVEVIAPGVIDRKSVDQPVQTGYKAVDSMVPIGRGQRELIIGDRQTGKTALAIDAIINQRDSGVKCIYVAVGQKASTIANVVRKLEENGALANTIVVAASASESAALQYLAPYAGCAMGEYFRDRGEDALIVYDDLSKQAVAYRQISLLLRRPPGREAYPGDVFYLHSRLLERAARVNEEYVENFTKGEVKGKTGSLTALPIIETQAGDVSAFVPTNVISITDGQIFLESNLFNAGVRPAVNPGISVSRVGGAAQTKAVKKLAGGIRTALAQYRELAAFAQFASDLDDATRKQLSHGEKVTELLKQKQYAPLSVAEQAVILFAVEFGYLDDVELNKIADFETALLDYANRTNTEFMQELTKSGDYNDEIKNTLKGILDNFKANNTW.

169 to 176 serves as a coordination point for ATP; that stretch reads GDRQTGKT.

It belongs to the ATPase alpha/beta chains family. F-type ATPases have 2 components, CF(1) - the catalytic core - and CF(0) - the membrane proton channel. CF(1) has five subunits: alpha(3), beta(3), gamma(1), delta(1), epsilon(1). CF(0) has three main subunits: a(1), b(2) and c(9-12). The alpha and beta chains form an alternating ring which encloses part of the gamma chain. CF(1) is attached to CF(0) by a central stalk formed by the gamma and epsilon chains, while a peripheral stalk is formed by the delta and b chains.

It localises to the cell inner membrane. The enzyme catalyses ATP + H2O + 4 H(+)(in) = ADP + phosphate + 5 H(+)(out). In terms of biological role, produces ATP from ADP in the presence of a proton gradient across the membrane. The alpha chain is a regulatory subunit. The polypeptide is ATP synthase subunit alpha (Mannheimia succiniciproducens (strain KCTC 0769BP / MBEL55E)).